The chain runs to 99 residues: Ragulator complex protein LAMTOR4 (99 aa).

Met1 is subject to N-acetylmethionine. Thr2 is subject to N-acetylthreonine; in Ragulator complex protein LAMTOR4, N-terminally processed. Ser67 is modified (phosphoserine; by PKA).

Belongs to the LAMTOR4 family. In terms of assembly, part of the Ragulator complex composed of LAMTOR1, LAMTOR2, LAMTOR3, LAMTOR4 and LAMTOR5. LAMTOR4 and LAMTOR5 form a heterodimer that interacts, through LAMTOR1, with a LAMTOR2, LAMTOR3 heterodimer. The Ragulator complex interacts with both the mTORC1 complex and heterodimers constituted of the Rag GTPases RagA/RRAGA, RagB/RRAGB, RagC/RRAGC and RagD/RRAGD; regulated by amino acid availability. The Ragulator complex interacts with SLC38A9; the probable amino acid sensor. Component of the lysosomal folliculin complex (LFC), composed of FLCN, FNIP1 (or FNIP2), RagA/RRAGA or RagB/RRAGB GDP-bound, RagC/RRAGC or RagD/RRAGD GTP-bound, and Ragulator. Post-translationally, phosphorylation at Ser-67 by PKA inhibits Ragulator complex assembly.

The protein localises to the lysosome. In terms of biological role, as part of the Ragulator complex it is involved in amino acid sensing and activation of mTORC1, a signaling complex promoting cell growth in response to growth factors, energy levels, and amino acids. Activated by amino acids through a mechanism involving the lysosomal V-ATPase, the Ragulator plays a dual role for the small GTPases Rag (RagA/RRAGA, RagB/RRAGB, RagC/RRAGC and/or RagD/RRAGD): it (1) acts as a guanine nucleotide exchange factor (GEF), activating the small GTPases Rag and (2) mediates recruitment of Rag GTPases to the lysosome membrane. Activated Ragulator and Rag GTPases function as a scaffold recruiting mTORC1 to lysosomes where it is in turn activated. This is Ragulator complex protein LAMTOR4 from Homo sapiens (Human).